We begin with the raw amino-acid sequence, 416 residues long: D-amino acid dehydrogenase (416 aa).

3–17 (VIVLGAGIVGVTSAY) serves as a coordination point for FAD.

It belongs to the DadA oxidoreductase family. Requires FAD as cofactor.

It catalyses the reaction a D-alpha-amino acid + A + H2O = a 2-oxocarboxylate + AH2 + NH4(+). It functions in the pathway amino-acid degradation; D-alanine degradation; NH(3) and pyruvate from D-alanine: step 1/1. In terms of biological role, oxidative deamination of D-amino acids. In Rhizobium johnstonii (strain DSM 114642 / LMG 32736 / 3841) (Rhizobium leguminosarum bv. viciae), this protein is D-amino acid dehydrogenase.